The chain runs to 510 residues: Beta-glucosidase 40 (510 aa).

Residues 1-29 form the signal peptide; that stretch reads MAHRRLIMTMTKMMMMVTMMMMMDKTCIC. A beta-D-glucoside contacts are provided by residues Q51, H152, and 197–198; that span reads NE. E198 acts as the Proton donor in catalysis. C217 and C225 are oxidised to a cystine. N-linked (GlcNAc...) asparagine glycans are attached at residues N229 and N278. Residue Y341 participates in a beta-D-glucoside binding. The N-linked (GlcNAc...) asparagine glycan is linked to N349. A beta-D-glucoside contacts are provided by residues E414, W464, 471–472, and F480; that span reads EW. E414 acts as the Nucleophile in catalysis. N-linked (GlcNAc...) asparagine glycosylation is present at N507.

It belongs to the glycosyl hydrolase 1 family.

The catalysed reaction is Hydrolysis of terminal, non-reducing beta-D-glucosyl residues with release of beta-D-glucose.. In Arabidopsis thaliana (Mouse-ear cress), this protein is Beta-glucosidase 40.